We begin with the raw amino-acid sequence, 340 residues long: Methionine import ATP-binding protein MetN 2 (340 aa).

The region spanning 2 to 241 is the ABC transporter domain; sequence ITLQNVVKEY…PKEKVTQRFV (240 aa). An ATP-binding site is contributed by 38–45; it reads GYSGAGKS.

Belongs to the ABC transporter superfamily. Methionine importer (TC 3.A.1.24) family. The complex is composed of two ATP-binding proteins (MetN), two transmembrane proteins (MetI) and a solute-binding protein (MetQ).

It localises to the cell membrane. The enzyme catalyses L-methionine(out) + ATP + H2O = L-methionine(in) + ADP + phosphate + H(+). The catalysed reaction is D-methionine(out) + ATP + H2O = D-methionine(in) + ADP + phosphate + H(+). In terms of biological role, part of the ABC transporter complex MetNIQ involved in methionine import. Responsible for energy coupling to the transport system. The chain is Methionine import ATP-binding protein MetN 2 from Listeria innocua serovar 6a (strain ATCC BAA-680 / CLIP 11262).